The chain runs to 376 residues: Calcium uniporter protein, mitochondrial (376 aa).

A mitochondrion-targeting transit peptide spans 1 to 34; the sequence is MAAKVCRSVLLLSRSSGAVASSAYPAFGVSSQRH. The Mitochondrial matrix segment spans residues 35–257; it reads QGTKTEALSM…LSKKAERRTT (223 aa). Residues 99 to 189 are N-terminal MCU domain; sequence VSVVYQNGLP…TSYLVQPPRR (91 aa). Positions 213 to 254 form a coiled coil; it reads TLRIEEHQLNKERELIGRLEDLNSQLQPLEKVKEELSKKAER. The chain crosses the membrane as a helical span at residues 258 to 280; it reads WVLWGGMAYMATQFGILARLTWW. Residues 281-289 lie on the Mitochondrial intermembrane side of the membrane; it reads EYSWDIMEP. The Selectivity filter signature appears at 284–292; that stretch reads WDIMEPVTY. Position 288 (E288) interacts with Ca(2+). Residues 290–309 form a helical membrane-spanning segment; the sequence is VTYFITYGTAMAMYAYFVLT. The tract at residues 309–314 is juxtamembrane helix; that stretch reads TRQEYL. The Mitochondrial matrix segment spans residues 310-376; that stretch reads RQEYLYPDAR…PIQQIDTSKD (67 aa). Residues 336 to 363 adopt a coiled-coil conformation; it reads FDIEKYNKLKDAIAEAELDLKRLRDPLQ.

The protein belongs to the MCU (TC 1.A.77) family. Homotetramer. Component of the uniplex complex.

The protein resides in the mitochondrion inner membrane. It carries out the reaction Ca(2+)(in) = Ca(2+)(out). Its activity is regulated as follows. MCU channel activity is regulated by the heterodimer composed of micu1 and micu2, which act as calcium-sensors. At low calcium levels, micu1 occludes the pore of the MCU channel, preventing mitochondrial calcium uptake. At higher calcium levels, calcium-binding to micu1 and micu2 induces a conformational change that weakens mcu-micu1 interactions and moves the micu1-micu2 heterodimer away from the pore, allowing calcium permeation through the channel. MCU channel activity is gated by emre/smdt1 via the juxtamembrane helix loop. Inhibited by ruthenium red or its derivative Ru360. In terms of biological role, channel-forming and calcium-conducting subunit of the mitochondrial inner membrane calcium uniporter complex (uniplex), which mediates calcium uptake into the mitochondrial matrix. Mcu channel activity is regulated by the calcium-sensor subunits of the uniplex micu1 and micu2. Mitochondrial calcium homeostasis plays key roles in cellular physiology and regulates ATP production, cytoplasmic calcium signals and activation of cell death pathways. Involved in buffering the amplitude of systolic calcium rises in cardiomyocytes. While dispensable for baseline homeostatic cardiac function, acts as a key regulator of short-term mitochondrial calcium loading underlying a 'fight-or-flight' response during acute stress: acts by mediating a rapid increase of mitochondrial calcium in pacemaker cells. Mitochondrial calcium uptake in skeletal muscle cells is involved in muscle size in adults. This chain is Calcium uniporter protein, mitochondrial, found in Danio rerio (Zebrafish).